The chain runs to 156 residues: MDINMTLVGQLIAFVVFVIFCMKYVWPPIIGAIEDRQATIADGLAASDRAAKDLELAQEKATAQLKEAKVQAASIVDAAKKHEAKIVDEAAGKAQVEKERILASGHAEIETERNRAKEELRKEVAVLAIAGAEKILERSIDAAAHSDILDKLVAEL.

The chain crosses the membrane as a helical span at residues Leu-11–Gly-31.

The protein belongs to the ATPase B chain family. As to quaternary structure, F-type ATPases have 2 components, F(1) - the catalytic core - and F(0) - the membrane proton channel. F(1) has five subunits: alpha(3), beta(3), gamma(1), delta(1), epsilon(1). F(0) has three main subunits: a(1), b(2) and c(10-14). The alpha and beta chains form an alternating ring which encloses part of the gamma chain. F(1) is attached to F(0) by a central stalk formed by the gamma and epsilon chains, while a peripheral stalk is formed by the delta and b chains.

Its subcellular location is the cell inner membrane. Functionally, f(1)F(0) ATP synthase produces ATP from ADP in the presence of a proton or sodium gradient. F-type ATPases consist of two structural domains, F(1) containing the extramembraneous catalytic core and F(0) containing the membrane proton channel, linked together by a central stalk and a peripheral stalk. During catalysis, ATP synthesis in the catalytic domain of F(1) is coupled via a rotary mechanism of the central stalk subunits to proton translocation. Its function is as follows. Component of the F(0) channel, it forms part of the peripheral stalk, linking F(1) to F(0). The chain is ATP synthase subunit b from Colwellia psychrerythraea (strain 34H / ATCC BAA-681) (Vibrio psychroerythus).